The primary structure comprises 319 residues: tRNA U34 carboxymethyltransferase (319 aa).

Carboxy-S-adenosyl-L-methionine-binding positions include Lys-88, Trp-102, Lys-107, Gly-126, 176–177 (LE), Met-192, Tyr-196, and Arg-311.

The protein belongs to the class I-like SAM-binding methyltransferase superfamily. CmoB family. In terms of assembly, homotetramer.

It carries out the reaction carboxy-S-adenosyl-L-methionine + 5-hydroxyuridine(34) in tRNA = 5-carboxymethoxyuridine(34) in tRNA + S-adenosyl-L-homocysteine + H(+). Its function is as follows. Catalyzes carboxymethyl transfer from carboxy-S-adenosyl-L-methionine (Cx-SAM) to 5-hydroxyuridine (ho5U) to form 5-carboxymethoxyuridine (cmo5U) at position 34 in tRNAs. The chain is tRNA U34 carboxymethyltransferase from Pseudomonas syringae pv. tomato (strain ATCC BAA-871 / DC3000).